Reading from the N-terminus, the 406-residue chain is MRGGLWQLGQSITRRLAQADKKTIGRRCFASDADLKKTVLYDFHVVNGGKMVPFAGWSMPIQYKDSIMDSTVNCRENGSLFDVSHMCGLSLKGKDTIPFLEKLVIADVAGLAPGTGSLTVFTNEKGGAIDDSVVTKVTNDHIYLVVNAGCRDKDLAHIEEHMKSFKSKGGDVSWHIHDERSLLALQGPLAAPVLQYLTKDDLSKMYFGEFRVLDINGAPCFLTRTGYTGEDGFEISVPSENALDLAKALLEKSEGKIRLTGLGARDSLRLEAGLCLYGNDMEQHTTPVEAGLTWAIGKRRRAEGGFLGAEVILKQIEEGPKIRRVGFFSSGPPPRSHSEIQDSNGQNIGEITSGGFSPCLKKNIAMGYVKTGNHKAGTNVKIVIRGKSYDGVVTKMPFVPTKYYKP.

The N-terminal 29 residues, 1 to 29, are a transit peptide targeting the mitochondrion; the sequence is MRGGLWQLGQSITRRLAQADKKTIGRRCF. Residues Glu234, Arg265, and Tyr403 each contribute to the substrate site.

Belongs to the GcvT family. In terms of assembly, the glycine cleavage system is composed of four proteins: P, T, L and H.

Its subcellular location is the mitochondrion. The catalysed reaction is N(6)-[(R)-S(8)-aminomethyldihydrolipoyl]-L-lysyl-[protein] + (6S)-5,6,7,8-tetrahydrofolate = N(6)-[(R)-dihydrolipoyl]-L-lysyl-[protein] + (6R)-5,10-methylene-5,6,7,8-tetrahydrofolate + NH4(+). The glycine cleavage system catalyzes the degradation of glycine. The protein is Aminomethyltransferase, mitochondrial (GDCST) of Solanum tuberosum (Potato).